The chain runs to 28 residues: Palustrin-1a (28 aa).

Cysteine 22 and cysteine 28 are oxidised to a cystine.

Expressed by the skin glands.

It localises to the secreted. In terms of biological role, antimicrobial activity against Gram-negative bacterium E.coli. This Lithobates palustris (Pickerel frog) protein is Palustrin-1a.